We begin with the raw amino-acid sequence, 293 residues long: Ethanolamine ammonia-lyase small subunit (293 aa).

Adenosylcob(III)alamin contacts are provided by V207 and E228.

It belongs to the EutC family. The basic unit is a heterodimer which dimerizes to form tetramers. The heterotetramers trimerize; 6 large subunits form a core ring with 6 small subunits projecting outwards. Adenosylcob(III)alamin is required as a cofactor.

Its subcellular location is the bacterial microcompartment. The catalysed reaction is ethanolamine = acetaldehyde + NH4(+). Its pathway is amine and polyamine degradation; ethanolamine degradation. Catalyzes the deamination of various vicinal amino-alcohols to oxo compounds. Allows this organism to utilize ethanolamine as the sole source of nitrogen and carbon in the presence of external vitamin B12. In Clostridioides difficile (strain 630) (Peptoclostridium difficile), this protein is Ethanolamine ammonia-lyase small subunit.